The chain runs to 682 residues: Iron-phytosiderophore transporter yellow stripe 1 (682 aa).

A disordered region spans residues 1–36; that stretch reads MDLARRGGAAGADDEGEIERHEPAPEDMESDPAAAR. The next 15 helical transmembrane spans lie at 56-76, 79-99, 124-144, 167-187, 236-256, 288-308, 334-354, 396-416, 428-448, 460-480, 514-534, 549-569, 574-594, 612-632, and 640-660; these read GVVA…KIAL, GLVP…LRGW, CAVA…LLGL, GFGW…LSLI, LSFV…CGFV, LVNI…WPLI, FLCI…VFGV, FPAW…AVII, VIVA…GTGL, IALF…AGLA, VAQF…FLLF, APYG…FSVL, LALS…RDVL, FLVG…VFVW, and AVFM…IWTF.

It belongs to the YSL (TC 2.A.67.2) family. As to expression, expressed in roots of young maize seedlings. Not detected in leaves of iron-sufficient plants, but accumulates in roots and leaves of iron-deficient plants.

It is found in the membrane. In terms of biological role, involved in Fe(3+) uptake. Acts as a proton-coupled symporter for phytosiderophore- and nicotianamine-chelated metals. Capable of transporting either Fe(2+)-nicotianamine or Fe(3+)-phytosiderophore. May transport iron, zinc, nickel, copper and, at a lower rate, manganese and cadmium. This chain is Iron-phytosiderophore transporter yellow stripe 1 (YS1), found in Zea mays (Maize).